Here is a 640-residue protein sequence, read N- to C-terminus: Lysophospholipase (640 aa).

An N-terminal signal peptide occupies residues 1–25; sequence MWFLNSVNLLFLVCSVALHLDAVNA. The PLA2c domain maps to 38 to 589; sequence DCDENINLVR…EKYCWNGTVD (552 aa). N-linked (GlcNAc...) asparagine glycosylation is found at Asn-84, Asn-126, Asn-163, Asn-173, Asn-218, Asn-280, Asn-310, Asn-317, Asn-348, Asn-391, Asn-492, Asn-516, Asn-544, Asn-568, and Asn-585. Positions 594–610 are enriched in low complexity; that stretch reads ISSTTSSSASSTSTSDS. Residues 594–616 are disordered; sequence ISSTTSSSASSTSTSDSGNKENS.

It belongs to the lysophospholipase family. Post-translationally, highly glycosylated.

Its subcellular location is the secreted. It carries out the reaction a 1-acyl-sn-glycero-3-phosphocholine + H2O = sn-glycerol 3-phosphocholine + a fatty acid + H(+). Catalyzes the release of fatty acids from lysophospholipids. At acidic pH the enzyme hydrolyzes all phospholipid substrates without metal ion. On the other hand, at alkaline pH the enzyme shows substrate specificity for phosphatidylcholine and lysophosphatidylcholine and requires Ca(2+), Fe(3+), or Al(3+) for the activity. This chain is Lysophospholipase (PLB), found in Kluyveromyces lactis (strain ATCC 8585 / CBS 2359 / DSM 70799 / NBRC 1267 / NRRL Y-1140 / WM37) (Yeast).